The sequence spans 379 residues: MKILRKNHPLLKIVNHSFIDLPTPSNISSWWNFGSLLGMCLVIQILTGLFLAMHYTSDTTTAFSSVAHICRDVNYGWLIRYLHANGASMFFICLFIHVGRGIYYGSYVLSETWNIGIILLLTTMATAFVGYVLPWGQMSFWGATVITNLLSAIPYIGNTLVEWIWGGFSVDKATLTRFFAFHFILPFIIAAFALVHLLFLHETGSNNPSGLNSDSDKIPFHPYYTTKDLLGIFLLLLVLMILALFFPDVLGDPDNFTPANPLNTPAHIKPEWYFLFAYAILRSIPNKLGGVLALVLSILILAAFPLLNTSKQHGLIFRPVTQVIYWIFIANLLVLTWIGGQPVEYPFTTIGQIASVTYFATIIILIPVSNTIENNIIKL.

The next 4 helical transmembrane spans lie at 33 to 53 (FGSLLGMCLVIQILTGLFLAM), 77 to 98 (WLIRYLHANGASMFFICLFIHV), 113 to 133 (WNIGIILLLTTMATAFVGYVL), and 178 to 198 (FFAFHFILPFIIAAFALVHLL). His-83 and His-97 together coordinate heme b. The heme b site is built by His-182 and His-196. His-201 lines the a ubiquinone pocket. The next 4 membrane-spanning stretches (helical) occupy residues 226-246 (TKDLLGIFLLLLVLMILALFF), 288-308 (LGGVLALVLSILILAAFPLLN), 320-340 (VTQVIYWIFIANLLVLTWIGG), and 347-367 (FTTIGQIASVTYFATIIILIP).

The protein belongs to the cytochrome b family. The cytochrome bc1 complex contains 11 subunits: 3 respiratory subunits (MT-CYB, CYC1 and UQCRFS1), 2 core proteins (UQCRC1 and UQCRC2) and 6 low-molecular weight proteins (UQCRH/QCR6, UQCRB/QCR7, UQCRQ/QCR8, UQCR10/QCR9, UQCR11/QCR10 and a cleavage product of UQCRFS1). This cytochrome bc1 complex then forms a dimer. Heme b serves as cofactor.

It is found in the mitochondrion inner membrane. Its function is as follows. Component of the ubiquinol-cytochrome c reductase complex (complex III or cytochrome b-c1 complex) that is part of the mitochondrial respiratory chain. The b-c1 complex mediates electron transfer from ubiquinol to cytochrome c. Contributes to the generation of a proton gradient across the mitochondrial membrane that is then used for ATP synthesis. The sequence is that of Cytochrome b (MT-CYB) from Akodon montensis (Montane grass mouse).